A 339-amino-acid chain; its full sequence is Phenylalanine--tRNA ligase alpha subunit (339 aa).

Mg(2+) is bound at residue Glu-250.

It belongs to the class-II aminoacyl-tRNA synthetase family. Phe-tRNA synthetase alpha subunit type 1 subfamily. As to quaternary structure, tetramer of two alpha and two beta subunits. It depends on Mg(2+) as a cofactor.

The protein localises to the cytoplasm. The catalysed reaction is tRNA(Phe) + L-phenylalanine + ATP = L-phenylalanyl-tRNA(Phe) + AMP + diphosphate + H(+). The polypeptide is Phenylalanine--tRNA ligase alpha subunit (Bacteroides fragilis (strain ATCC 25285 / DSM 2151 / CCUG 4856 / JCM 11019 / LMG 10263 / NCTC 9343 / Onslow / VPI 2553 / EN-2)).